Here is a 437-residue protein sequence, read N- to C-terminus: Cytochrome c biogenesis protein Ccs1 (437 aa).

The next 3 helical transmembrane spans lie at 23–43 (LQFS…GTII), 82–102 (TWWF…CSLS), and 168–188 (LAPI…VLGL).

It belongs to the Ccs1/CcsB family. As to quaternary structure, may interact with CcsA.

The protein localises to the plastid. It is found in the chloroplast thylakoid membrane. Functionally, required during biogenesis of c-type cytochromes (cytochrome c6 and cytochrome f) at the step of heme attachment. This Porphyra purpurea (Red seaweed) protein is Cytochrome c biogenesis protein Ccs1.